The following is a 192-amino-acid chain: Urease accessory protein UreE (192 aa).

The tract at residues 170 to 192 (EHHGHSHSHSHDHVHDEKCGHKH) is disordered. The segment covering 178–192 (HSHDHVHDEKCGHKH) has biased composition (basic and acidic residues).

The protein belongs to the UreE family.

It localises to the cytoplasm. Its function is as follows. Involved in urease metallocenter assembly. Binds nickel. Probably functions as a nickel donor during metallocenter assembly. In Cupriavidus necator (strain ATCC 17699 / DSM 428 / KCTC 22496 / NCIMB 10442 / H16 / Stanier 337) (Ralstonia eutropha), this protein is Urease accessory protein UreE.